The sequence spans 163 residues: Phosphopantetheine adenylyltransferase (163 aa).

A substrate-binding site is contributed by threonine 10. Residues 10 to 11 (TF) and histidine 18 each bind ATP. Substrate-binding residues include lysine 42, leucine 74, and arginine 88. ATP is bound by residues 89 to 91 (GLR), glutamate 99, and 124 to 130 (NSFISST).

This sequence belongs to the bacterial CoaD family. Homohexamer. It depends on Mg(2+) as a cofactor.

The protein localises to the cytoplasm. It catalyses the reaction (R)-4'-phosphopantetheine + ATP + H(+) = 3'-dephospho-CoA + diphosphate. The protein operates within cofactor biosynthesis; coenzyme A biosynthesis; CoA from (R)-pantothenate: step 4/5. Its function is as follows. Reversibly transfers an adenylyl group from ATP to 4'-phosphopantetheine, yielding dephospho-CoA (dPCoA) and pyrophosphate. This Shewanella sp. (strain W3-18-1) protein is Phosphopantetheine adenylyltransferase.